The primary structure comprises 793 residues: Splicing factor 3A subunit 1 (793 aa).

The tract at residues Met1–Ile43 is disordered. The span at Ala8–Pro19 shows a compositional bias: pro residues. A Glycyl lysine isopeptide (Lys-Gly) (interchain with G-Cter in SUMO2) cross-link involves residue Lys20. Residues Gln21–Ala34 show a composition bias toward basic and acidic residues. One copy of the SURP motif 1 repeat lies at Ile52 to Tyr94. Lys55 is subject to N6-acetyllysine. A Glycyl lysine isopeptide (Lys-Gly) (interchain with G-Cter in SUMO2) cross-link involves residue Lys131. Residues Val166–Phe208 form an SURP motif 2 repeat. The disordered stretch occupies residues Gly318–His428. Phosphoserine occurs at positions 320, 329, and 359. Composition is skewed to acidic residues over residues Ser320–Asp334 and Asp354–Glu364. Positions Val368 to Pro384 are enriched in pro residues. Positions Ile388–Ala397 are enriched in basic and acidic residues. At Ser413 the chain carries Phosphoserine. Lys424 participates in a covalent cross-link: Glycyl lysine isopeptide (Lys-Gly) (interchain with G-Cter in SUMO2). Phosphoserine is present on Ser451. Position 456 is a phosphotyrosine (Tyr456). Positions Ile488–Trp502 are enriched in basic and acidic residues. Disordered stretches follow at residues Ile488–Ala518, His530–Pro584, and Ala665–Glu688. A Glycyl lysine isopeptide (Lys-Gly) (interchain with G-Cter in SUMO2) cross-link involves residue Lys499. Ser508 is subject to Phosphoserine. The segment covering Met509–Ala518 has biased composition (polar residues). Residue Lys542 forms a Glycyl lysine isopeptide (Lys-Gly) (interchain with G-Cter in SUMO2) linkage. Residues Ala665–Pro675 are compositionally biased toward pro residues. Residues Pro680–Lys702 are required and sufficient for nuclear import. A Glycyl lysine isopeptide (Lys-Gly) (interchain with G-Cter in SUMO2) cross-link involves residue Lys686. The 87-residue stretch at Ile707–Lys793 folds into the Ubiquitin-like domain. Tyr759 is subject to Phosphotyrosine.

In terms of assembly, component of the 17S U2 SnRNP complex, a ribonucleoprotein complex that contains small nuclear RNA (snRNA) U2 and a number of specific proteins. Part of the SF3A subcomplex of the 17S U2 SnRNP complex which is composed of three subunits; SF3A3/SAP61, SF3A2/SAP62 and SF3A1/SAP114. SF3A associates with the splicing factor SF3B and a 12S RNA unit to form the mature 17S U2 small nuclear ribonucleoprotein complex (17S U2 snRNP). SF3A1 functions as a scaffold that interacts directly with both SF3A2 and SF3A3. Identified in the spliceosome 'E' complex, a precursor of the spliceosome 'A' complex. Identified in the spliceosome 'A' and 'B' complexes. Identified in the spliceosome 'C' complex. Interacts with P2RX6; resulting in a reduction of the splicing activity. In terms of tissue distribution, ubiquitously expressed.

The protein localises to the nucleus. The protein resides in the nucleus speckle. Component of the 17S U2 SnRNP complex of the spliceosome, a large ribonucleoprotein complex that removes introns from transcribed pre-mRNAs. The 17S U2 SnRNP complex (1) directly participates in early spliceosome assembly and (2) mediates recognition of the intron branch site during pre-mRNA splicing by promoting the selection of the pre-mRNA branch-site adenosine, the nucleophile for the first step of splicing. Within the 17S U2 SnRNP complex, SF3A1 is part of the SF3A subcomplex that contributes to the assembly of the 17S U2 snRNP, and the subsequent assembly of the pre-spliceosome 'E' complex and the pre-catalytic spliceosome 'A' complex. Involved in pre-mRNA splicing as a component of pre-catalytic spliceosome 'B' complexes. The sequence is that of Splicing factor 3A subunit 1 (SF3A1) from Homo sapiens (Human).